The following is a 309-amino-acid chain: MRRVILSNPRGFCAGVVRAIQVVESALEKWGAPIYVKHEIVHNRHVVDDLKRRGAIFIEDLKDVPCGEKVIYSAHGIPPEVREEAKARNLFDIDATCVLVTKIHSAVKLYASKGYQIILIGKKKHVEVIGIRGEAPESVTVVEKVEDVANLPFDIHVPLFFVTQTTLSLDDVAEVTQALKARYPHIITLPSSSVCYATQNRQEALRAVLPRVNFVYVIGDVQSSNSNRLREVAEKRNIPARLVNSPDHISDEILHYSGDIAVTAGASTPEHIIQSCISRLKELIPDLQVEEDIFTTEDVVFQPPKELRT.

Position 13 (Cys13) interacts with [4Fe-4S] cluster. (2E)-4-hydroxy-3-methylbut-2-enyl diphosphate contacts are provided by His42 and His75. Residues His42 and His75 each contribute to the dimethylallyl diphosphate site. His42 and His75 together coordinate isopentenyl diphosphate. Cys97 contributes to the [4Fe-4S] cluster binding site. Position 125 (His125) interacts with (2E)-4-hydroxy-3-methylbut-2-enyl diphosphate. Residue His125 participates in dimethylallyl diphosphate binding. His125 serves as a coordination point for isopentenyl diphosphate. Glu127 serves as the catalytic Proton donor. Thr165 contacts (2E)-4-hydroxy-3-methylbut-2-enyl diphosphate. Cys195 provides a ligand contact to [4Fe-4S] cluster. Residues Ser223, Ser224, Asn225, and Ser267 each coordinate (2E)-4-hydroxy-3-methylbut-2-enyl diphosphate. Residues Ser223, Ser224, Asn225, and Ser267 each coordinate dimethylallyl diphosphate. The isopentenyl diphosphate site is built by Ser223, Ser224, Asn225, and Ser267.

This sequence belongs to the IspH family. The cofactor is [4Fe-4S] cluster.

It catalyses the reaction isopentenyl diphosphate + 2 oxidized [2Fe-2S]-[ferredoxin] + H2O = (2E)-4-hydroxy-3-methylbut-2-enyl diphosphate + 2 reduced [2Fe-2S]-[ferredoxin] + 2 H(+). It carries out the reaction dimethylallyl diphosphate + 2 oxidized [2Fe-2S]-[ferredoxin] + H2O = (2E)-4-hydroxy-3-methylbut-2-enyl diphosphate + 2 reduced [2Fe-2S]-[ferredoxin] + 2 H(+). Its pathway is isoprenoid biosynthesis; dimethylallyl diphosphate biosynthesis; dimethylallyl diphosphate from (2E)-4-hydroxy-3-methylbutenyl diphosphate: step 1/1. It functions in the pathway isoprenoid biosynthesis; isopentenyl diphosphate biosynthesis via DXP pathway; isopentenyl diphosphate from 1-deoxy-D-xylulose 5-phosphate: step 6/6. In terms of biological role, catalyzes the conversion of 1-hydroxy-2-methyl-2-(E)-butenyl 4-diphosphate (HMBPP) into a mixture of isopentenyl diphosphate (IPP) and dimethylallyl diphosphate (DMAPP). Acts in the terminal step of the DOXP/MEP pathway for isoprenoid precursor biosynthesis. The polypeptide is 4-hydroxy-3-methylbut-2-enyl diphosphate reductase (Chlamydia abortus (strain DSM 27085 / S26/3) (Chlamydophila abortus)).